The following is a 240-amino-acid chain: Ribonuclease PH (240 aa).

Phosphate is bound by residues Arg87 and 125-127; that span reads GTR.

The protein belongs to the RNase PH family. Homohexameric ring arranged as a trimer of dimers.

It catalyses the reaction tRNA(n+1) + phosphate = tRNA(n) + a ribonucleoside 5'-diphosphate. In terms of biological role, phosphorolytic 3'-5' exoribonuclease that plays an important role in tRNA 3'-end maturation. Removes nucleotide residues following the 3'-CCA terminus of tRNAs; can also add nucleotides to the ends of RNA molecules by using nucleoside diphosphates as substrates, but this may not be physiologically important. Probably plays a role in initiation of 16S rRNA degradation (leading to ribosome degradation) during starvation. This Ruminiclostridium cellulolyticum (strain ATCC 35319 / DSM 5812 / JCM 6584 / H10) (Clostridium cellulolyticum) protein is Ribonuclease PH.